Here is a 309-residue protein sequence, read N- to C-terminus: Porphobilinogen deaminase (309 aa).

C241 is modified (S-(dipyrrolylmethanemethyl)cysteine).

Belongs to the HMBS family. Monomer. Dipyrromethane serves as cofactor.

The catalysed reaction is 4 porphobilinogen + H2O = hydroxymethylbilane + 4 NH4(+). It participates in porphyrin-containing compound metabolism; protoporphyrin-IX biosynthesis; coproporphyrinogen-III from 5-aminolevulinate: step 2/4. Tetrapolymerization of the monopyrrole PBG into the hydroxymethylbilane pre-uroporphyrinogen in several discrete steps. The polypeptide is Porphobilinogen deaminase (Bacillus cereus (strain ZK / E33L)).